The sequence spans 624 residues: Atypical kinase COQ8B, mitochondrial (624 aa).

Residues 90–117 are disordered; that stretch reads EMPPDFSSKDGRGETSETPVGAATGTIK. Residues 189-205 traverse the membrane as a helical segment; the sequence is LANFGGLAVGLGIGAIA. The short motif at 249-252 is the KxGQ motif element; sequence KIGQ. One can recognise a Protein kinase domain in the interval 285–517; that stretch reads MHKVLEEELG…ATVLKKSKDL (233 aa). Positions 310–313 match the AAAS motif motif; the sequence is AAAS. ATP-binding positions include serine 313, lysine 331, and 418–421; that span reads MELV. Catalysis depends on aspartate 461, which acts as the Proton acceptor. Asparagine 466 and aspartate 480 together coordinate ATP.

The protein belongs to the protein kinase superfamily. ADCK protein kinase family. In terms of assembly, homodimer; homodimerizes via its transmembrane region. Interacts with the multi-subunit COQ enzyme complex.

The protein localises to the mitochondrion membrane. It localises to the cytoplasm. Its subcellular location is the cytosol. It is found in the cell membrane. Its pathway is cofactor biosynthesis; ubiquinone biosynthesis. Functionally, atypical kinase involved in the biosynthesis of coenzyme Q, also named ubiquinone, an essential lipid-soluble electron transporter for aerobic cellular respiration. Its substrate specificity is still unclear: may act as a protein kinase that mediates phosphorylation of COQ3. According to other reports, acts as a small molecule kinase, possibly a lipid kinase that phosphorylates a prenyl lipid in the ubiquinone biosynthesis pathway, as suggested by its ability to bind coenzyme Q lipid intermediates. However, the small molecule kinase activity was not confirmed by another publication. Required for podocyte migration. This chain is Atypical kinase COQ8B, mitochondrial, found in Danio rerio (Zebrafish).